The following is a 217-amino-acid chain: MSQETVLASIEEAIDKSLKLGRGKRFKQSVEIIVALKDIDLKSPQARIRETVFLPNRPPKEAKVCVVAHGDMELQAKEAGVEVLNRQDLQNLSQNKREVKKLARRCYWVLVRADLMGLAGRILGPALGPRGKAPVPVPPNANIKDLIERYKAAVWVRIRNQPQVMARIGTEDMSPRELAENALAVLQVIENRLGRGKISRIYVKKTMGPPVEVPAIG.

This sequence belongs to the universal ribosomal protein uL1 family. As to quaternary structure, part of the 50S ribosomal subunit.

Binds directly to 23S rRNA. Probably involved in E site tRNA release. In terms of biological role, protein L1 is also a translational repressor protein, it controls the translation of its operon by binding to its mRNA. The chain is Large ribosomal subunit protein uL1 from Aeropyrum pernix (strain ATCC 700893 / DSM 11879 / JCM 9820 / NBRC 100138 / K1).